Here is a 305-residue protein sequence, read N- to C-terminus: tRNA dimethylallyltransferase (305 aa).

11-18 lines the ATP pocket; the sequence is GPTAVGKT. Position 13-18 (13-18) interacts with substrate; it reads TAVGKT. Residues 36–39 are interaction with substrate tRNA; it reads DSMQ.

Belongs to the IPP transferase family. Monomer. Mg(2+) is required as a cofactor.

It catalyses the reaction adenosine(37) in tRNA + dimethylallyl diphosphate = N(6)-dimethylallyladenosine(37) in tRNA + diphosphate. In terms of biological role, catalyzes the transfer of a dimethylallyl group onto the adenine at position 37 in tRNAs that read codons beginning with uridine, leading to the formation of N6-(dimethylallyl)adenosine (i(6)A). The sequence is that of tRNA dimethylallyltransferase from Listeria monocytogenes serotype 4b (strain CLIP80459).